We begin with the raw amino-acid sequence, 71 residues long: Biotinylated protein TB7.3 homolog (71 aa).

Positions 2–71 constitute a Biotinyl-binding domain; sequence AEDVRAEIVA…QAGHLIAVID (70 aa). Lys-37 bears the N6-biotinyllysine mark.

The chain is Biotinylated protein TB7.3 homolog from Mycolicibacterium smegmatis (strain ATCC 700084 / mc(2)155) (Mycobacterium smegmatis).